The following is a 188-amino-acid chain: dCTP deaminase (188 aa).

Residues 111 to 116, 135 to 137, Gln156, Tyr170, and Gln180 each bind dCTP; these read KSTYAR and TLE. The active-site Proton donor/acceptor is the Glu137.

It belongs to the dCTP deaminase family. Homotrimer.

It catalyses the reaction dCTP + H2O + H(+) = dUTP + NH4(+). It participates in pyrimidine metabolism; dUMP biosynthesis; dUMP from dCTP (dUTP route): step 1/2. Its function is as follows. Catalyzes the deamination of dCTP to dUTP. This Paracidovorax citrulli (strain AAC00-1) (Acidovorax citrulli) protein is dCTP deaminase.